Consider the following 196-residue polypeptide: Carnitine operon protein CaiE (196 aa).

A disordered region spans residues 173 to 196; sequence TQPLRQMEENRPRLQGTTDVTPKR. Residues 187–196 are compositionally biased toward polar residues; that stretch reads QGTTDVTPKR.

Belongs to the transferase hexapeptide repeat family.

Its pathway is amine and polyamine metabolism; carnitine metabolism. Its function is as follows. Overproduction of CaiE stimulates the activity of CaiB and CaiD. This Escherichia coli O7:K1 (strain IAI39 / ExPEC) protein is Carnitine operon protein CaiE.